Consider the following 512-residue polypeptide: MTQFITHKWLAALGLASSIAAFPALAAKDVVVAVGSNFTTLDPYDANDTLSQAVAKSFYQGLFGLDKDMKVKNVLAEGYTVSDDGLTYTITLRQGVKFQDGADFNAAAVKANLDRASNPDNHLKRYNLYKNIAKTEVVDPATVKITLKQPFSAFINILAHPATAMISPQALEKYGKDIGFHPVGTGPYQLETWNQTDFVKVKKFAGYWQQGLPKLDSITWRPVTDNNTRAAMLQTGEAQFAFPIPYEQAALLAKNKNLELVASPSIMQRYISMNVTQKPFDNPKVREALNYAINRQALVKVAFAGYATPATGVVPPSIAYAQSYQPWPYDPAKARELLKEAGYPDGFSTTLWSSHNHSTAQKVLQFTQQQLAQIGIKARITAMDAGQRAAEVEGKGQKESGVRMFYTGWSASTGEADWALSPLFASQNWPPTQFNTAFYSNKQVDSDLAAALKTNDPQEKTRLYKEAQDIIWKESPWIPLVVEKLVSAHSKNLTGFWIMPDTGFSFDDADLK.

A signal peptide spans 1–26; it reads MTQFITHKWLAALGLASSIAAFPALA.

This sequence belongs to the bacterial solute-binding protein 5 family. In terms of assembly, the complex is composed of two ATP-binding proteins (GsiA), two transmembrane proteins (GsiC and GsiD) and a solute-binding protein (GsiB).

It localises to the periplasm. Part of the ABC transporter complex GsiABCD involved in glutathione import. Binds glutathione. This Salmonella typhi protein is Glutathione-binding protein GsiB.